Here is a 147-residue protein sequence, read N- to C-terminus: UPF0735 ACT domain-containing protein Cthe_1377 (147 aa).

Residues 71-146 (TLFFTVEDYA…GVKRQEILAR (76 aa)) form the ACT domain.

The protein belongs to the UPF0735 family.

The protein is UPF0735 ACT domain-containing protein Cthe_1377 of Acetivibrio thermocellus (strain ATCC 27405 / DSM 1237 / JCM 9322 / NBRC 103400 / NCIMB 10682 / NRRL B-4536 / VPI 7372) (Clostridium thermocellum).